Here is a 102-residue protein sequence, read N- to C-terminus: Small ribosomal subunit protein uS10 (102 aa).

Belongs to the universal ribosomal protein uS10 family. As to quaternary structure, part of the 30S ribosomal subunit.

Functionally, involved in the binding of tRNA to the ribosomes. The chain is Small ribosomal subunit protein uS10 from Citrifermentans bemidjiense (strain ATCC BAA-1014 / DSM 16622 / JCM 12645 / Bem) (Geobacter bemidjiensis).